A 94-amino-acid polypeptide reads, in one-letter code: Trp operon repressor homolog (94 aa).

Residues 58-81 (QREIAEKYGVSIAQITRGSNALKG) mediate DNA binding.

This sequence belongs to the TrpR family. Homodimer.

It is found in the cytoplasm. This protein is an aporepressor. When complexed with L-tryptophan it binds the operator region of the trp operon and prevents the initiation of transcription. The polypeptide is Trp operon repressor homolog (Chlamydia trachomatis serovar A (strain ATCC VR-571B / DSM 19440 / HAR-13)).